A 305-amino-acid chain; its full sequence is Oxygen-dependent coproporphyrinogen-III oxidase (305 aa).

Serine 94 serves as a coordination point for substrate. A divalent metal cation is bound by residues histidine 98 and histidine 108. Histidine 108 acts as the Proton donor in catalysis. 110 to 112 (NVR) serves as a coordination point for substrate. Residues histidine 147 and histidine 177 each coordinate a divalent metal cation. Residues 242–277 (YVEFNLVYDRGTLFGLQTGGRTESILMSMPPLVRWE) form an important for dimerization region. Residue 260-262 (GGR) participates in substrate binding.

The protein belongs to the aerobic coproporphyrinogen-III oxidase family. In terms of assembly, homodimer. Requires a divalent metal cation as cofactor.

The protein localises to the cytoplasm. It carries out the reaction coproporphyrinogen III + O2 + 2 H(+) = protoporphyrinogen IX + 2 CO2 + 2 H2O. It participates in porphyrin-containing compound metabolism; protoporphyrin-IX biosynthesis; protoporphyrinogen-IX from coproporphyrinogen-III (O2 route): step 1/1. Involved in the heme biosynthesis. Catalyzes the aerobic oxidative decarboxylation of propionate groups of rings A and B of coproporphyrinogen-III to yield the vinyl groups in protoporphyrinogen-IX. The chain is Oxygen-dependent coproporphyrinogen-III oxidase from Shewanella denitrificans (strain OS217 / ATCC BAA-1090 / DSM 15013).